A 334-amino-acid chain; its full sequence is MRRLVRNWNCRLLFNAKSGQEIVSHAGIHQEAKTNAIPREKKVIEADKNGYGAKHCMSLVEKYDYENYLCTLLLPRELRRAAFALRAFNVEVSRSVSGHQIEPQIAKMRLKFWHDSIDKCFEPDSQRSYVEDQPVLRELKHTVGSRKLNKVYLRRLVTARERPPTHAFESIRELEEYTEQTFSSLLLLLLEVGGVRDLNADHAASHLGKAQGIATLLRSIPLAGRQQAPCIPLEVLVLHGVSQERIIRSKSDDKGVEDCIFDVASAANTHLKLARQLHDKVPPQVRKIFLSAVATDAYLERLRRANFLLTHKSCVGRDTLLPARLFWKSLLNRF.

The transit peptide at 1-11 (MRRLVRNWNCR) directs the protein to the mitochondrion.

This sequence belongs to the NDUFAF6 family. As to quaternary structure, associates with mitochondrial complex I assembly intermediates during its biogenesis. Forms a complex including sicily, ND-42 and Hsp83; the complex is necessary to chaperone ND-42 in the cytoplasm before mitochondrial import; the interaction between sicily and ND-42 is direct and occurs preferably between the unprocessed forms in the cytoplasm; the interaction with Hsp83 is direct. Interacts with ND-30; interaction is stronger between the unprocessed forms in the cytoplasm. In terms of tissue distribution, expressed in the ventral nerve cord, larval brain, motor neuron axons, imaginal disks, and muscles (at protein level).

The protein localises to the mitochondrion inner membrane. It localises to the cytoplasm. Its subcellular location is the cytosol. Its function is as follows. Involved in the assembly of mitochondrial NADH:ubiquinone oxidoreductase complex (Complex I) at early stages. Interacts with cytosolic Hsp90 to chaperone the Complex I subunit ND-42 in the cytoplasm. This chain is NADH dehydrogenase (ubiquinone) complex I, assembly factor 6 homolog, found in Drosophila melanogaster (Fruit fly).